The sequence spans 75 residues: Small ribosomal subunit protein bS18c (75 aa).

The protein belongs to the bacterial ribosomal protein bS18 family. Part of the 30S ribosomal subunit.

Its subcellular location is the plastid. The protein resides in the chloroplast. The polypeptide is Small ribosomal subunit protein bS18c (Angiopteris evecta (Mule's foot fern)).